The primary structure comprises 20 residues: Hongotoxin-5 (20 aa).

It belongs to the short scorpion toxin superfamily. Potassium channel inhibitor family. Alpha-KTx 02 subfamily. In terms of tissue distribution, expressed by the venom gland.

Its subcellular location is the secreted. Potent selective inhibitor of Kv1/KCNA voltage-gated potassium channels. This is Hongotoxin-5 from Centruroides limbatus (Bark scorpion).